The chain runs to 297 residues: Acetyl-coenzyme A carboxylase carboxyl transferase subunit beta (297 aa).

The CoA carboxyltransferase N-terminal domain maps to 27-296 (LWHKCPSCEA…PVETSQVTAK (270 aa)). Positions 31, 34, 50, and 53 each coordinate Zn(2+). Residues 31-53 (CPSCEAVLYRPELEKTLDVCPKC) form a C4-type zinc finger.

It belongs to the AccD/PCCB family. As to quaternary structure, acetyl-CoA carboxylase is a heterohexamer composed of biotin carboxyl carrier protein (AccB), biotin carboxylase (AccC) and two subunits each of ACCase subunit alpha (AccA) and ACCase subunit beta (AccD). The cofactor is Zn(2+).

It is found in the cytoplasm. It catalyses the reaction N(6)-carboxybiotinyl-L-lysyl-[protein] + acetyl-CoA = N(6)-biotinyl-L-lysyl-[protein] + malonyl-CoA. The protein operates within lipid metabolism; malonyl-CoA biosynthesis; malonyl-CoA from acetyl-CoA: step 1/1. Its function is as follows. Component of the acetyl coenzyme A carboxylase (ACC) complex. Biotin carboxylase (BC) catalyzes the carboxylation of biotin on its carrier protein (BCCP) and then the CO(2) group is transferred by the transcarboxylase to acetyl-CoA to form malonyl-CoA. In Stutzerimonas stutzeri (strain A1501) (Pseudomonas stutzeri), this protein is Acetyl-coenzyme A carboxylase carboxyl transferase subunit beta.